The following is a 663-amino-acid chain: 4-hydroxy-3-methylbut-2-en-1-yl diphosphate synthase (flavodoxin) (663 aa).

[4Fe-4S] cluster-binding residues include Cys-568, Cys-571, Cys-602, and Glu-609.

This sequence belongs to the IspG family. [4Fe-4S] cluster serves as cofactor.

It catalyses the reaction (2E)-4-hydroxy-3-methylbut-2-enyl diphosphate + oxidized [flavodoxin] + H2O + 2 H(+) = 2-C-methyl-D-erythritol 2,4-cyclic diphosphate + reduced [flavodoxin]. Its pathway is isoprenoid biosynthesis; isopentenyl diphosphate biosynthesis via DXP pathway; isopentenyl diphosphate from 1-deoxy-D-xylulose 5-phosphate: step 5/6. Converts 2C-methyl-D-erythritol 2,4-cyclodiphosphate (ME-2,4cPP) into 1-hydroxy-2-methyl-2-(E)-butenyl 4-diphosphate. This Leptospira interrogans serogroup Icterohaemorrhagiae serovar copenhageni (strain Fiocruz L1-130) protein is 4-hydroxy-3-methylbut-2-en-1-yl diphosphate synthase (flavodoxin).